A 293-amino-acid polypeptide reads, in one-letter code: 33 kDa chaperonin (293 aa).

Cystine bridges form between C238–C240 and C271–C274.

This sequence belongs to the HSP33 family. In terms of processing, under oxidizing conditions two disulfide bonds are formed involving the reactive cysteines. Under reducing conditions zinc is bound to the reactive cysteines and the protein is inactive.

It is found in the cytoplasm. Redox regulated molecular chaperone. Protects both thermally unfolding and oxidatively damaged proteins from irreversible aggregation. Plays an important role in the bacterial defense system toward oxidative stress. This chain is 33 kDa chaperonin, found in Clostridium beijerinckii (strain ATCC 51743 / NCIMB 8052) (Clostridium acetobutylicum).